The chain runs to 282 residues: 2-dehydro-3-deoxyphosphooctonate aldolase (282 aa).

It belongs to the KdsA family.

The protein localises to the cytoplasm. The enzyme catalyses D-arabinose 5-phosphate + phosphoenolpyruvate + H2O = 3-deoxy-alpha-D-manno-2-octulosonate-8-phosphate + phosphate. It participates in carbohydrate biosynthesis; 3-deoxy-D-manno-octulosonate biosynthesis; 3-deoxy-D-manno-octulosonate from D-ribulose 5-phosphate: step 2/3. The protein operates within bacterial outer membrane biogenesis; lipopolysaccharide biosynthesis. In Shewanella baltica (strain OS185), this protein is 2-dehydro-3-deoxyphosphooctonate aldolase.